The sequence spans 802 residues: uncharacterized protein (802 aa).

Positions 6–41 (SRSEKVKRIFQQFDGNLDGGLSREEMSALVVAVNPR) constitute an EF-hand 1 domain. TPR repeat units lie at residues 229-262 (FDGH…QPTD), 264-296 (RPHF…AESG), 305-338 (PQIY…CPTH), 339-372 (YRAL…KPDY), 373-406 (ADAH…KPGH), 407-440 (VDAL…WPNH), and 442-474 (RAQL…TNRV). The EF-hand 2 domain occupies 595–630 (AIKAINEKILSVLDDSGSGRVDLGMFYAVIAPLCGG).

This is an uncharacterized protein from Arabidopsis thaliana (Mouse-ear cress).